The following is a 313-amino-acid chain: Non-structural protein 3 (313 aa).

The interval 1–149 (MLKMESTQQM…TRLMKDKLER (149 aa)) is RNA-binding. Residues 150–206 (GEVEVDDSFVEEKMEVDTIDWKSRYEQLEKRFESLKHRVNEKYNHWVLKARKVNENM) form a dimerization region. The stretch at 166–237 (DTIDWKSRYE…NKLERDLQSK (72 aa)) forms a coiled coil. Positions 170 to 234 (WKSRYEQLEK…MYNNKLERDL (65 aa)) are interaction with host ZC3H7B. The interaction with host EIF4G1 stretch occupies residues 208–313 (SLQNVISQQQ…QQCNYTYTYE (106 aa)).

It belongs to the rotavirus NSP3 family. Homodimer. Interacts (via the coiled-coil region) with host ZC3H7B (via LD motif). Interacts with host EIF4G1.

The protein localises to the host cytoplasm. Its function is as follows. Plays an important role in stimulating the translation of viral mRNAs. These mRNAs are capped but not polyadenylated, instead terminating in a conserved sequence 'GACC' at the 3' that is recognized by NSP3, which competes with host PABPC1 for EIF4G1 binding. The interaction between NSP3 and host EIF4G1 stabilizes the EIF4E-EIF4G1 interaction, thereby facilitating the initiation of capped mRNA translation. The protein is Non-structural protein 3 of Rotavirus A (strain RVA/Monkey/United States/RRV/1975/G3P5B[3]) (RV-A).